The sequence spans 431 residues: MGTVVIVGTQWGDEGKGKITDFLSQGAKVVSRYQGGDNAGHTIHANGEVYKLRLVPSGVLYPHQLSVIGNGVVVNPKSLVGELARLAEQGVTGENLRISDRAHVILPYHIKLDKLQEAAKGADKIGTTNRGIGPAYMDKAARVGIRMADLLDKEIFEERLKANLKAKNEEFVKVYDSTPMNFDDIFEEYYQYGQQLKQYVCDTSIVLNDAIDKGEHVLFEGAQGIMLDIDQGTYPFVTSSNPAGGVTVGAGVGASKIDRVVGVAKAYTSRVGDGPFPTELLDKTGDFIRNAGHEFGTVTGRPRRIGWFDAVVVRHSRRVAGITDLCLNSIDVLTGLDKVKICVAYERDGERVENYPASLKFLSECKPVYEELPGWQEDITKAKTLDDLPENARRYVERITELLGVDLLTFSVGPDRDQTNVLENVWDKVSR.

GTP is bound by residues 12–18 and 40–42; these read GDEGKGK and GHT. Asp13 serves as the catalytic Proton acceptor. Mg(2+)-binding residues include Asp13 and Gly40. Residues 13–16, 38–41, Thr128, Arg142, Gln223, Thr238, and Arg301 contribute to the IMP site; these read DEGK and NAGH. His41 functions as the Proton donor in the catalytic mechanism. 297–303 lines the substrate pocket; that stretch reads TVTGRPR. GTP contacts are provided by residues Arg303, 329 to 331, and 411 to 413; these read SID and SVG.

It belongs to the adenylosuccinate synthetase family. As to quaternary structure, homodimer. The cofactor is Mg(2+).

The protein localises to the cytoplasm. It catalyses the reaction IMP + L-aspartate + GTP = N(6)-(1,2-dicarboxyethyl)-AMP + GDP + phosphate + 2 H(+). It functions in the pathway purine metabolism; AMP biosynthesis via de novo pathway; AMP from IMP: step 1/2. Plays an important role in the de novo pathway of purine nucleotide biosynthesis. Catalyzes the first committed step in the biosynthesis of AMP from IMP. The protein is Adenylosuccinate synthetase of Lacticaseibacillus paracasei (strain ATCC 334 / BCRC 17002 / CCUG 31169 / CIP 107868 / KCTC 3260 / NRRL B-441) (Lactobacillus paracasei).